A 256-amino-acid chain; its full sequence is Fructose-1,6-bisphosphatase/inositol-1-monophosphatase (256 aa).

The Mg(2+) site is built by E67, D83, L85, and D86. Residues D86–S88, R170, I175, and R194 each bind substrate. D201 contributes to the Mg(2+) binding site.

This sequence belongs to the inositol monophosphatase superfamily. FBPase class 4 family. Homodimer. Mg(2+) is required as a cofactor.

The catalysed reaction is beta-D-fructose 1,6-bisphosphate + H2O = beta-D-fructose 6-phosphate + phosphate. The enzyme catalyses a myo-inositol phosphate + H2O = myo-inositol + phosphate. Phosphatase with broad specificity; it can dephosphorylate fructose 1,6-bisphosphate (FBP) and inositol-1-phosphate (IMP). However, while possessing a high FBPase activity in vitro, does not participate in gluconeogenesis in vivo. The chain is Fructose-1,6-bisphosphatase/inositol-1-monophosphatase (suhB) from Thermococcus kodakarensis (strain ATCC BAA-918 / JCM 12380 / KOD1) (Pyrococcus kodakaraensis (strain KOD1)).